We begin with the raw amino-acid sequence, 102 residues long: Small ribosomal subunit protein uS10 (102 aa).

This sequence belongs to the universal ribosomal protein uS10 family. In terms of assembly, part of the 30S ribosomal subunit.

Functionally, involved in the binding of tRNA to the ribosomes. The sequence is that of Small ribosomal subunit protein uS10 from Lactobacillus gasseri (strain ATCC 33323 / DSM 20243 / BCRC 14619 / CIP 102991 / JCM 1131 / KCTC 3163 / NCIMB 11718 / NCTC 13722 / AM63).